Reading from the N-terminus, the 175-residue chain is ATP synthase subunit delta (175 aa).

Belongs to the ATPase delta chain family. F-type ATPases have 2 components, F(1) - the catalytic core - and F(0) - the membrane proton channel. F(1) has five subunits: alpha(3), beta(3), gamma(1), delta(1), epsilon(1). F(0) has three main subunits: a(1), b(2) and c(10-14). The alpha and beta chains form an alternating ring which encloses part of the gamma chain. F(1) is attached to F(0) by a central stalk formed by the gamma and epsilon chains, while a peripheral stalk is formed by the delta and b chains.

The protein localises to the cell inner membrane. In terms of biological role, f(1)F(0) ATP synthase produces ATP from ADP in the presence of a proton or sodium gradient. F-type ATPases consist of two structural domains, F(1) containing the extramembraneous catalytic core and F(0) containing the membrane proton channel, linked together by a central stalk and a peripheral stalk. During catalysis, ATP synthesis in the catalytic domain of F(1) is coupled via a rotary mechanism of the central stalk subunits to proton translocation. Functionally, this protein is part of the stalk that links CF(0) to CF(1). It either transmits conformational changes from CF(0) to CF(1) or is implicated in proton conduction. The sequence is that of ATP synthase subunit delta from Stenotrophomonas maltophilia (strain R551-3).